A 321-amino-acid chain; its full sequence is Mas-related G-protein coupled receptor member B4 (321 aa).

Topologically, residues 1 to 33 (MGTTTLAWNINNTAENGSYTEMFSCITKFNTLN) are extracellular. Residues Asn-11 and Asn-16 are each glycosylated (N-linked (GlcNAc...) asparagine). A helical transmembrane segment spans residues 34–54 (FLTVIIAVVGLAGNGIVLWLL). Topologically, residues 55 to 62 (AFHLHRNA) are cytoplasmic. Residues 63 to 83 (FSVYVLNLAGADFLYLFTQVV) form a helical membrane-spanning segment. The Extracellular portion of the chain corresponds to 84-97 (HSLECVLQLDNNSF). An N-linked (GlcNAc...) asparagine glycan is attached at Asn-94. Residues 98–118 (YILLIVTMFAYLAGLCMIAAI) traverse the membrane as a helical segment. Over 119–146 (SAERCLSVMWPIWYHCQRPRHTSAIMCA) the chain is Cytoplasmic. A helical transmembrane segment spans residues 147–167 (LVWVSSLLLSLVVGLGCGFLF). At 168–172 (SYYDY) the chain is on the extracellular side. Residues 173 to 193 (YFCITLNFITAAFLIVLSVVL) form a helical membrane-spanning segment. The Cytoplasmic segment spans residues 194–215 (SVSSLALLVKIVWGSHRIPVTR). Residues 216–236 (FFVTIALTVVVFIYFGMPFGI) form a helical membrane-spanning segment. At 237 to 257 (CWFLLSRIMEFDSIFFNNVYE) the chain is on the extracellular side. Residues 258 to 278 (IIEFLSCVNSCANPIIYFLVG) form a helical membrane-spanning segment. The Cytoplasmic portion of the chain corresponds to 279–321 (SIRQHRLRWQSLKLLLQRAMQDTPEEESGERGPSQRSGELETV). The disordered stretch occupies residues 299–321 (QDTPEEESGERGPSQRSGELETV).

Belongs to the G-protein coupled receptor 1 family. Mas subfamily.

The protein resides in the membrane. Its function is as follows. Orphan receptor. Probably involved in the function of nociceptive neurons. May regulate nociceptor function and/or development, including the sensation or modulation of pain. The sequence is that of Mas-related G-protein coupled receptor member B4 (Mrgprb4) from Mus musculus (Mouse).